Reading from the N-terminus, the 503-residue chain is MTSTEGTGGGDGKGISGFSDIERRSILDPHLSVLELLRRPSDTRPHEALKGEVSDIVGNCAGTTGTGNGSISQSWQTIHRNDSCLSVVPERCPSQATAAGILSSSDTSEDEPDAVNSPSAVHQQLHATPPQKHTKSLEDYRSLNVGIPLVLPEDSNNINNNNKNGSTTGSNGEEDDNDTITKSLNSSSNSFIMPKLSLSQKTQKFRILVLGRPGLKFYHSIPKKYQHMFELPRSHDPAEFKQYTGILVVFQELKEMVSLLNRVCQCNPNRPVIPVCQSGQRQQVRNLLESLLKNRLVSLLYPPVVVNNQPDLLGMFRFLQELSKTVSDNSDMDAEEPNNGSKRLKRSLQRKKKKFIETSAERNGRPHKKRHNNEKVNRWVLWGVSLTLGVGVGYCISHLVSSTWISLTTNPLGPVDPESVSKDLFVFDRQELKLGEMDMDSDHPFGHALFLFKQALKQWNLAVKQFLGRHLSCMERIGPANCLEWPTSDEHTNRVLALGYVML.

Disordered stretches follow at residues alanine 98–glutamate 138, leucine 151–serine 186, and aspartate 328–arginine 370. The segment covering asparagine 116–histidine 126 has biased composition (polar residues). The span at serine 155 to asparagine 171 shows a compositional bias: low complexity. Basic residues predominate over residues lysine 342–lysine 354. The span at phenylalanine 355–glycine 364 shows a compositional bias: basic and acidic residues. Residues valine 380 to isoleucine 396 form a helical membrane-spanning segment.

The protein belongs to the ATG32 family.

It is found in the mitochondrion outer membrane. It localises to the vacuole membrane. Its subcellular location is the preautophagosomal structure membrane. Mitophagy-specific receptor that recruits the autophagic machinery to mitochondria and regulates selective degradation of mitochondria. Mitophagy contributes to regulate mitochondrial quantity and quality by eliminating the mitochondria to a basal level to fulfill cellular energy requirements and preventing excess ROS production. Recruits ATG11 to the surface of mitochondria. Also promotes autophagy-dependent peroxisome degradation. The polypeptide is Autophagy-related protein 32 (ATG32) (Zygosaccharomyces rouxii (strain ATCC 2623 / CBS 732 / NBRC 1130 / NCYC 568 / NRRL Y-229)).